The primary structure comprises 182 residues: NADH-ubiquinone oxidoreductase 20 kDa subunit (182 aa).

[4Fe-4S] cluster contacts are provided by Cys-57, Cys-58, Cys-122, and Cys-152.

It belongs to the complex I 20 kDa subunit family. [4Fe-4S] cluster is required as a cofactor.

Its subcellular location is the mitochondrion. It carries out the reaction a ubiquinone + NADH + 5 H(+)(in) = a ubiquinol + NAD(+) + 4 H(+)(out). This is NADH-ubiquinone oxidoreductase 20 kDa subunit (NAD10) from Reclinomonas americana.